The chain runs to 138 residues: Basic phospholipase A2 homolog CTs-K49a (138 aa).

An N-terminal signal peptide occupies residues 1-16 (MRTLWIMAVLLVVVEG). Disulfide bonds link Cys-42-Cys-131, Cys-44-Cys-60, Cys-59-Cys-111, Cys-65-Cys-138, Cys-66-Cys-104, and Cys-91-Cys-102. Positions 121-133 (KKKKINLKLFCKK) are important for membrane-damaging activities in eukaryotes and bacteria; heparin-binding.

It belongs to the phospholipase A2 family. Group II subfamily. K49 sub-subfamily. Expressed by the venom gland.

Its subcellular location is the secreted. Functionally, snake venom phospholipase A2 homolog that lacks catalytic activity. It shows myotoxic and weak anticoagulant activities. A model of myotoxic mechanism has been proposed: an apo Lys49-PLA2 is activated by the entrance of a hydrophobic molecule (e.g. fatty acid) at the hydrophobic channel of the protein leading to a reorientation of a monomer. This reorientation causes a transition between 'inactive' to 'active' states, causing alignment of C-terminal and membrane-docking sites (MDoS) side-by-side and putting the membrane-disruption sites (MDiS) in the same plane, exposed to solvent and in a symmetric position for both monomers. The MDoS region stabilizes the toxin on membrane by the interaction of charged residues with phospholipid head groups. Subsequently, the MDiS region destabilizes the membrane with penetration of hydrophobic residues. This insertion causes a disorganization of the membrane, allowing an uncontrolled influx of ions (i.e. calcium and sodium), and eventually triggering irreversible intracellular alterations and cell death. This is Basic phospholipase A2 homolog CTs-K49a from Trimeresurus stejnegeri (Chinese green tree viper).